Consider the following 450-residue polypeptide: MLVLFETSGGFALFKVLDEGKLSNVEDLGTEFYSAESARRMGLHKFLKNNCDDGEILAVADPKLGDIITEKLDIECVHNDAVMELLRGVRSQLTELLSGLDDNDLAPVSLELSHILARYKLKITSDKVETMIILSISLLDDLDKELNTYTTSVCELYGLHFPELANIVQDNILYAKVVKLMGNRINAATLDFSEILADEVEAELKEASMVSTRTEVSDLDLMHIQELCDQVLSIAEDKTLLCDDLKNKMNKIAPNLTALVGELVGARLISHCGSLWNLSKLPWSTIQILGAEKTLYKALKTKQATPKYGLIYHAPLVRQAAPENKGKIARSLAAKSALAIRCDAFGNGQDNTMGVESRLKLEARLRNLEGGDLGACEEEEEVNDKDTKKEADDEEEPKTEECSKKRKKEAELETVEDPAKKSKQEGVTGLLLLMLLISLIYFFSVNQLLW.

In terms of domain architecture, Nop spans Ile-252 to Gly-370. The tract at residues Ala-375–Lys-423 is disordered. The span at Thr-399–Lys-423 shows a compositional bias: basic and acidic residues.

The protein belongs to the NOP5/NOP56 family.

The protein resides in the nucleus. It is found in the nucleolus. In terms of biological role, required for 60S ribosomal subunit biogenesis. The polypeptide is Putative nucleolar protein 5-3 (NOP5-3) (Arabidopsis thaliana (Mouse-ear cress)).